The primary structure comprises 213 residues: MDPLQKRNPASPSKSSPMTAAETSQEGPAPSQPSYSEQPMMGLSNLSPGPGPSQAVPLPEGLLRQRYREEKTLEERRWERLEFLQRKKAFLRHVRRRHRDHMAPYAVGREARISPLGDRSQNRFRCECRYCQSHRPNLSGIPGESNRAPHPSSWETLVQGLSGLTLSLGTNQPGPLPEAALQPQETEEKRQRERQQESKIMFQRLLKQWLEEN.

An N-acetylmethionine modification is found at methionine 1. The interval 1–62 is disordered; it reads MDPLQKRNPA…SQAVPLPEGL (62 aa). A compositionally biased stretch (polar residues) spans 8–37; the sequence is NPASPSKSSPMTAAETSQEGPAPSQPSYSE. Serine 114 is subject to Phosphoserine. Residues 154–170 form a helical membrane-spanning segment; sequence WETLVQGLSGLTLSLGT. A disordered region spans residues 165 to 198; the sequence is TLSLGTNQPGPLPEAALQPQETEEKRQRERQQES. Basic and acidic residues predominate over residues 186-197; that stretch reads TEEKRQRERQQE.

It is found in the membrane. The protein is Protein FAM156A/FAM156B (FAM156A) of Homo sapiens (Human).